An 840-amino-acid chain; its full sequence is Translation initiation factor IF-2 (840 aa).

The segment covering 95–143 has biased composition (basic and acidic residues); the sequence is RSPDEIEAERQRELEEQRAAEEAERLKAEEAAARQRAEEEARKAEEAAR. Disordered stretches follow at residues 95–155 and 173–256; these read RSPD…ATAG and PAAV…PTGP. A compositionally biased stretch (low complexity) spans 144 to 155; that stretch reads AKAAQEAAATAG. Basic and acidic residues-rich tracts occupy residues 175-191 and 223-232; these read AVEE…PKRD and STDEESDGYR. Residues 233-247 show a composition bias toward basic residues; it reads RGGRGGKSKLKKRNQ. Residues 340–509 enclose the tr-type G domain; the sequence is TRAPVVTVMG…LLQAEVLELK (170 aa). The G1 stretch occupies residues 349-356; the sequence is GHVDHGKT. GTP is bound at residue 349–356; sequence GHVDHGKT. A G2 region spans residues 374–378; sequence GITQH. The tract at residues 395-398 is G3; sequence DTPG. GTP is bound by residues 395 to 399 and 449 to 452; these read DTPGH and NKID. Positions 449–452 are G4; the sequence is NKID. The G5 stretch occupies residues 485 to 487; that stretch reads SAK.

The protein belongs to the TRAFAC class translation factor GTPase superfamily. Classic translation factor GTPase family. IF-2 subfamily.

Its subcellular location is the cytoplasm. One of the essential components for the initiation of protein synthesis. Protects formylmethionyl-tRNA from spontaneous hydrolysis and promotes its binding to the 30S ribosomal subunits. Also involved in the hydrolysis of GTP during the formation of the 70S ribosomal complex. This is Translation initiation factor IF-2 from Pseudomonas aeruginosa (strain ATCC 15692 / DSM 22644 / CIP 104116 / JCM 14847 / LMG 12228 / 1C / PRS 101 / PAO1).